The sequence spans 474 residues: Cell division protein FtsP (474 aa).

Positions 1-27 (MSLSRRQFIQAAGLALGAGSLPLRAQA) form a signal peptide, tat-type signal. Positions 229–288 (WVRLRLLNASNARRYTLQLSDGRPLYVVASDQGFLPAPVAVQQLSLAPGERREVVIDMSQ) constitute a Plastocyanin-like domain.

It belongs to the FtsP family. In terms of processing, predicted to be exported by the Tat system. The position of the signal peptide cleavage has not been experimentally proven.

It is found in the periplasm. In terms of biological role, cell division protein that is required for growth during stress conditions. May be involved in protecting or stabilizing the divisomal assembly under conditions of stress. This is Cell division protein FtsP from Yersinia pestis.